Consider the following 117-residue polypeptide: uncharacterized protein (117 aa).

The chain crosses the membrane as a helical span at residues 76 to 96 (FIMSSGCFLIASLSCVGLTVF).

The protein localises to the membrane. This is an uncharacterized protein from Saccharomyces cerevisiae (strain ATCC 204508 / S288c) (Baker's yeast).